The following is a 317-amino-acid chain: MDATLNIAIAAEFELSEKIVERLEQSALEISKVSIVEIIPFEEEQNIRFRNKGVEQLSPNEVEWADFNYVFFAGKLEQVSHIAQAAEQGCIVIDMLGVCSALSDVPVVVPTVNESQLLELRQRNIVSLPDPQVSQLALTLAPILQETNLNQVFVTSLLPASYTDAETVTKLAGQTARLLNGIPLDEEETRLAFDVYPYQTPNLSNQLQRIFPQLDRATFHAIQVPVFYGLAQKVTALSDYDFDYQPQNSELIALEETLITPVLNGEQENGEESVKLHLSQISAVENGVEFWSVADEQRFNLALLSVKLLEGIYQQGY.

This sequence belongs to the aspartate-semialdehyde dehydrogenase family.

This is USG-1 protein homolog (usg) from Haemophilus influenzae (strain ATCC 51907 / DSM 11121 / KW20 / Rd).